Reading from the N-terminus, the 555-residue chain is Embryonic protein DC-8 (555 aa).

The span at 83–115 (RENTDYAYDKGREGGDVAAQKAEEAKEKAKMAK) shows a compositional bias: basic and acidic residues. Disordered stretches follow at residues 83–118 (RENT…KDTT) and 132–151 (KAEE…KEKA). 17 repeat units span residues 97–114 (GDVA…AKMA), 115–125 (KDTTMGKAGEY), 126–140 (KDYT…KEKA), 141–154 (AQKA…AGEY), 155–176 (KNYT…AGEY), 177–191 (KDYA…KDTT), 192–205 (AQKA…TGEY), 206–216 (KDYAAQKAAEA), 217–237 (KVLA…DGEY), 238–259 (KDYA…TGEY), 260–281 (KDYA…AKEY), 282–303 (KEYA…TGEY), 304–325 (KDYS…TKEY), 326–343 (KDYT…TMEK), 344–358 (AKEA…TGEY), 359–376 (KDYA…TVEK), and 377–391 (AKEG…MTEL). Residues 97-391 (GDVAAQKAEE…DTTVGKMTEL (295 aa)) form a 17 X approximate tandem repeats region. The segment at 184–204 (AAEAKDTTAQKAAEAKEKTGE) is disordered. The span at 444–465 (LQEEGVKDEAKQRAEADRETAG) shows a compositional bias: basic and acidic residues. The tract at residues 444-472 (LQEEGVKDEAKQRAEADRETAGDRGSAAK) is disordered.

This sequence belongs to the LEA type 4 family.

It is found in the cytoplasm. Its subcellular location is the secreted. The protein localises to the cell wall. Its function is as follows. May play a role in late embryogeny. In Daucus carota (Wild carrot), this protein is Embryonic protein DC-8.